The primary structure comprises 445 residues: MSERKYFGTDGIRGKVGSSPITPDFVLKLGWAAGKVLARHGSRKIIIGKDTRISGYMLESALEAGLAAAGLSAAFTGPMPTPAVAYLTRTFRAEAGIVISASHNPYYDNGIKFFSIDGTKLPDEVEAAIEAELDKPLTCVESAELGKASRIVDAAGRYIEFCKSTFPNALSLSGLKIVADCANGATYHIAPNVLRELGAEVITIGTSPDGMNINKECGATDVRALQARVVAENADLGMAFDGDGDRLIMVDHRGDKVDGDQILYIVAREALRQGKLHGGVVGTLMSNMGLELALKQLGIPFARAKVGDRYVLETMQEKGWRMGAENSGHVIILDQTTTGDGIVAGLQVLAAMARNHMSLTDLCSGMTLLPQVLVNVRFAGQCDPLQDTAVQHSCAEVERQLAGRGRVLLRKSGTEPLIRVMVEGEDLQQVTDLANTIADAVKAAS.

S102 functions as the Phosphoserine intermediate in the catalytic mechanism. Mg(2+) is bound by residues S102, D241, D243, and D245. S102 carries the phosphoserine modification.

This sequence belongs to the phosphohexose mutase family. Mg(2+) is required as a cofactor. In terms of processing, activated by phosphorylation.

The enzyme catalyses alpha-D-glucosamine 1-phosphate = D-glucosamine 6-phosphate. In terms of biological role, catalyzes the conversion of glucosamine-6-phosphate to glucosamine-1-phosphate. This is Phosphoglucosamine mutase from Edwardsiella ictaluri (strain 93-146).